A 233-amino-acid chain; its full sequence is uncharacterized protein (233 aa).

3 helical membrane passes run 78 to 98 (FCLI…PVMY), 113 to 133 (FITC…LFKL), and 188 to 208 (FLLI…YGTI).

The protein resides in the membrane. This is an uncharacterized protein from Saccharomyces cerevisiae (strain ATCC 204508 / S288c) (Baker's yeast).